The following is a 329-amino-acid chain: 3'-5' exonuclease (329 aa).

Residues 26–88 (EEKPKPKKVV…MADVGTPSPE (63 aa)) form a disordered region. A compositionally biased stretch (basic and acidic residues) spans 46-65 (KNLDTPEIVNKENAEVENPP). Phosphoserine is present on residues Ser78 and Ser86. The 159-residue stretch at 130-288 (TEIVPMAFDM…IGQVIYREIE (159 aa)) folds into the 3'-5' exonuclease domain. Residues Asp138, Glu140, and Asp276 each coordinate Mg(2+).

This sequence belongs to the WRNexo family.

Its subcellular location is the nucleus. Its function is as follows. Has exonuclease activity on both single-stranded and duplex templates bearing overhangs, but not blunt ended duplex DNA, and cleaves in a 3'-5' direction. Essential for the formation of DNA replication focal centers. Has an important role in maintaining genome stability. The protein is 3'-5' exonuclease of Drosophila mojavensis (Fruit fly).